The chain runs to 1707 residues: MTGGPPYNSQSPTQQPRYPVYSPPSKTRPYYPNNDQYQQHPPQTPPAFPPQPPLARSPHYSHAPSPLPATLPPLNGGAPPSHHQESSSQYQAHQSSGTPQFPLPRPYSASVLSSNGASPYNHPTPSHAHPSSGRLDSLSQSPPKKDQESLYPIGGNVASGFSSSIMLSPPCILSDSIQKPARAADPMSFASILSGPTEERPLPRKQSPLPEPAPVQTPAPAPPVLAPVPAARKATPPPPTAPVPVPAPLPEIKEPEPLPTPLPRLEKKPSAEKRRRNVDQESRASESLPVPPTNGVSEPAKVSRASNVRKTMSERDTEAINKIIAEIDNAEKSDVESPGFEAEYERYIAKGKKRALDAEKAESIRRKRRRHDFLVKLGKTFEKQANAGMDRFRVANEASVIAEVQAKEIQDEKERKKDMQRKRRRENTVRLEMQKKIEAERKANKANDAAEKAKFLREAERAQRKIKSTKRALEGVTSPEEIGEVTPLAPNLEGGTTSSFHIGRSSPSRRKSGRSGGSSRPKKSKEQKQAEKDAAEAAYAAMENDEPLPLAPKEDPRKESLKKEAKGARSKEPTPQPLSAFESKGYNQIYEQIWRDIARKDIPKVYRIKALSLSTRQENLRKTAQLASKQSRKWQERTNKSMKDTQARAKRTMREMMSFWKRNEREERDLRRLAEKQEIESAKKAEAEREANRQRRKLNFLISQTELYSHFIGRKIKGAEADASGDAAVDGSDETVRPGKAGDHTIDLPSSVADLSTKVTNFEDLDFDAEDETALRQAAMANAQNAVKEAQDRARAFNAEENPMAALDEGELNFQNPTSLGDIEISQPNMLTAKLKEYQLKGLNWLVNLYEQGINGILADEMGLGKTIQSISVMAYLAEVHNIWGPFLVIAPASTLHNWQQEITKFVPDIKVLPYWGSAKDRKVLRKFWDRKHITYTKESEFHVLVTSYQLVVLDSQYFQKVKWQYMILDEAQAIKSSQSSRWKNLLGFSCRNRLLLTGTPIQNNMQELWALLHFIMPTLFDSHDEFSEWFSKDIESHAQSNTKLNEDQLRRLHMILKPFMLRRVKKHVQQELGDKVEKDVFCDLTYRQRAYYTNLRNRVSIMDLIEKAAVGDEADSTTLMNLVMQFRKVCNHPDLFERAETKSPFSLAHFAETASFVREGQNVDVRYSTRNLIEYDLPRLLFSSSGRLDVAGPDNEKVGFQNKYLQHLMNIFTPENIKRSVEDDGAFSFLRFADTSINEAYEQSHLGVFERAVRRRGQSDRLSQLGVIYDNEGDQTANSVLPHSLFNIVERNDRQAVYDVAPEGYMRDLMTVSESSFERQGLNVIEPCASPAASAPPIFISCSGQTALRETNDTFFSVPVRHALYSTPSRQLEEQILEKKLDPAPFSLPPMLPKPLSAKGRYTHIEVPSMRRFVTDSGKLAKLDELLRELKAGGHRVLLYFQMTRMIDLMEEYLTYRNYKYCRLDGSTKLEDRRDTVADFQQRPDIFVFLLSTRAGGLGINLTAADTVIFYDSDWNPTIDSQAMDRAHRLGQTRQVTVYRLITRGTIEERIRKRALQKEEVQRVVISGGAAGGVDFNTRNRESRTKDIAMWLADDEQAELIEQKEKEALDRGEVFGAGKGGKKAALKRKKDLTLDDMYHEGEGNFDDISAKPSGAATPVSTADNIATPSSTPVPKRGRGRGTVKGSSKRAKTTTERLRLIDGDGGL.

5 disordered regions span residues 1 to 156 (MTGG…IGGN), 178 to 314 (QKPA…TMSE), 410 to 580 (QDEK…PLSA), 627 to 649 (ASKQ…QARA), and 722 to 748 (DASG…TIDL). Polar residues predominate over residues 7-16 (YNSQSPTQQP). Residues 42–55 (PQTPPAFPPQPPLA) show a composition bias toward pro residues. Polar residues-rich tracts occupy residues 86 to 99 (SSSQ…SGTP) and 110 to 124 (SVLS…NHPT). 2 stretches are compositionally biased toward pro residues: residues 209–226 (LPEP…PVLA) and 235–249 (TPPP…PAPL). Composition is skewed to basic and acidic residues over residues 264 to 284 (RLEK…ESRA), 426 to 463 (ENTV…ERAQ), 524 to 535 (SKEQKQAEKDAA), 552 to 572 (PKED…RSKE), 633 to 647 (KWQE…DTQA), and 734 to 746 (ETVR…DHTI). Positions 395–478 (ANEASVIAEV…TKRALEGVTS (84 aa)) form a coiled coil. Positions 593–718 (IWRDIARKDI…SHFIGRKIKG (126 aa)) constitute a DBINO domain. A coiled-coil region spans residues 635-706 (QERTNKSMKD…KLNFLISQTE (72 aa)). The region spanning 847 to 1019 (VNLYEQGING…WALLHFIMPT (173 aa)) is the Helicase ATP-binding domain. ATP is bound at residue 860-867 (DEMGLGKT). The DEAQ box motif lies at 970–973 (DEAQ). Residues 1423–1583 (KLDELLRELK…GVDFNTRNRE (161 aa)) enclose the Helicase C-terminal domain. The interval 1643–1707 (EGNFDDISAK…LRLIDGDGGL (65 aa)) is disordered. Over residues 1659–1673 (PVSTADNIATPSSTP) the composition is skewed to polar residues. The segment covering 1676 to 1692 (KRGRGRGTVKGSSKRAK) has biased composition (basic residues). Positions 1693–1707 (TTTERLRLIDGDGGL) are enriched in basic and acidic residues.

The protein belongs to the SNF2/RAD54 helicase family. As to quaternary structure, component of the INO80 chromatin-remodeling complex.

It is found in the nucleus. It catalyses the reaction ATP + H2O = ADP + phosphate + H(+). In terms of biological role, ATPase component of the INO80 complex which remodels chromatin by shifting nucleosomes and is involved in DNA repair. This Aspergillus clavatus (strain ATCC 1007 / CBS 513.65 / DSM 816 / NCTC 3887 / NRRL 1 / QM 1276 / 107) protein is Chromatin-remodeling ATPase INO80 (ino80).